The primary structure comprises 132 residues: Large-conductance mechanosensitive channel (132 aa).

The next 2 helical transmembrane spans lie at 14 to 34 and 67 to 87; these read VIDLAVGVVIGAAFGKIVSSL and GNFIQTIFDFLIIAAAIFMFV.

It belongs to the MscL family. In terms of assembly, homopentamer.

Its subcellular location is the cell membrane. Its function is as follows. Channel that opens in response to stretch forces in the membrane lipid bilayer. May participate in the regulation of osmotic pressure changes within the cell. In Bacillus cereus (strain AH820), this protein is Large-conductance mechanosensitive channel.